Consider the following 118-residue polypeptide: V-type proton ATPase subunit G 1 (118 aa).

Ala-2 is modified (N-acetylalanine). Residues 19-42 (AEKVSEARKRKNRRLKQAKEEAQA) form a disordered region.

This sequence belongs to the V-ATPase G subunit family. V-ATPase is a heteromultimeric enzyme made up of two complexes: the ATP-hydrolytic V1 complex and the proton translocation V0 complex. The V1 complex consists of three catalytic AB heterodimers that form a heterohexamer, three peripheral stalks each consisting of EG heterodimers, one central rotor including subunits D and F, and the regulatory subunits C and H. The proton translocation complex V0 consists of the proton transport subunit a, a ring of proteolipid subunits c9c'', rotary subunit d, subunits e and f, and the accessory subunits ATP6AP1/Ac45 and ATP6AP2/PRR. Brain, heart, kidney and spleen.

Its subcellular location is the apical cell membrane. Subunit of the V1 complex of vacuolar(H+)-ATPase (V-ATPase), a multisubunit enzyme composed of a peripheral complex (V1) that hydrolyzes ATP and a membrane integral complex (V0) that translocates protons. V-ATPase is responsible for acidifying and maintaining the pH of intracellular compartments and in some cell types, is targeted to the plasma membrane, where it is responsible for acidifying the extracellular environment. In aerobic conditions, involved in intracellular iron homeostasis, thus triggering the activity of Fe(2+) prolyl hydroxylase (PHD) enzymes, and leading to HIF1A hydroxylation and subsequent proteasomal degradation. The chain is V-type proton ATPase subunit G 1 (ATP6V1G1) from Bos taurus (Bovine).